A 315-amino-acid polypeptide reads, in one-letter code: MIDDAAPPYVGRFAPSPSGPLHFGSLVAAVGSFLDARAHHGQWRLRIEDVDTPRTVPGAAQDILATLERFGFEWDGKPVWQSARLDAYRDAFERLRAAGQVFPCACTRREMADSALARDGSRLYPGTCRNGLPPGRSAHAWRVRAHGRIAFADRIQGPQEEDLATEVGDYVVLRGDGQFAYQLAVVVDDAAAGVTDIVRGADLLGSTGRQIHLQHLLGYPTPAYAHLPVVVNTAGEKLSKQTLAAPVAALPPARALFAALTFLGQNPPPALGRASLRETWKWAVTHWSLVDVPRQLQAEAPGAFSARARENPSSL.

L-glutamate contacts are provided by residues 12–16 (RFAPS) and E48. The 'HIGH' region signature appears at 15 to 25 (PSPSGPLHFGS). Zn(2+)-binding residues include C104, C106, Y124, and C128. L-glutamate contacts are provided by Y181 and R199. Residues 237–241 (KLSKQ) carry the 'KMSKS' region motif. Residue K240 coordinates ATP.

This sequence belongs to the class-I aminoacyl-tRNA synthetase family. GluQ subfamily. It depends on Zn(2+) as a cofactor.

Functionally, catalyzes the tRNA-independent activation of glutamate in presence of ATP and the subsequent transfer of glutamate onto a tRNA(Asp). Glutamate is transferred on the 2-amino-5-(4,5-dihydroxy-2-cyclopenten-1-yl) moiety of the queuosine in the wobble position of the QUC anticodon. The protein is Glutamyl-Q tRNA(Asp) synthetase of Aromatoleum aromaticum (strain DSM 19018 / LMG 30748 / EbN1) (Azoarcus sp. (strain EbN1)).